The following is a 391-amino-acid chain: Probable sugar efflux transporter (391 aa).

12 consecutive transmembrane segments (helical) span residues 16-36 (VFVF…PVAL), 51-71 (VGLM…PLML), 82-102 (LLFL…AWNF), 110-130 (MGIA…VIRV), 138-158 (QALG…LPLG), 170-190 (TFGV…KLLP), 210-230 (PLLM…FTTY), 247-267 (ITTL…FLFG), 277-297 (FIAF…VFKN), 300-320 (WVVF…GISL), 338-358 (IYSG…SIVI), and 361-381 (LGLG…LFWL).

The protein belongs to the major facilitator superfamily. SotB (TC 2.A.1.2) family.

The protein localises to the cell inner membrane. In terms of biological role, involved in the efflux of sugars. The physiological role may be the reduction of the intracellular concentration of toxic sugars or sugar metabolites. The protein is Probable sugar efflux transporter of Helicobacter pylori (strain ATCC 700392 / 26695) (Campylobacter pylori).